The primary structure comprises 162 residues: Regulator of sigma D (162 aa).

It belongs to the Rsd/AlgQ family. Interacts with RpoD.

It localises to the cytoplasm. In terms of biological role, binds RpoD and negatively regulates RpoD-mediated transcription activation by preventing the interaction between the primary sigma factor RpoD with the catalytic core of the RNA polymerase and with promoter DNA. May be involved in replacement of the RNA polymerase sigma subunit from RpoD to RpoS during the transition from exponential growth to the stationary phase. In Salmonella typhi, this protein is Regulator of sigma D.